The following is an 87-amino-acid chain: Small ribosomal subunit protein uS15c (87 aa).

Belongs to the universal ribosomal protein uS15 family. As to quaternary structure, part of the 30S ribosomal subunit.

Its subcellular location is the plastid. It localises to the chloroplast. This is Small ribosomal subunit protein uS15c (rps15) from Solanum bulbocastanum (Wild potato).